The primary structure comprises 752 residues: Iron-sulfur clusters transporter ABCB7, mitochondrial (752 aa).

Residues 1-22 (MALLAIHSWRWAAAAVAFEKHK) constitute a mitochondrion transit peptide. Residues 23–140 (HSAVLTRSLV…KDRPDLRARV (118 aa)) are Mitochondrial matrix-facing. The ABC transmembrane type-1 domain maps to 140–436 (VAISLGFLGG…LGTVYRETRQ (297 aa)). The chain crosses the membrane as a helical span at residues 141 to 161 (AISLGFLGGAKAMNIVVPFMF). Over 162-185 (KYAVDSLNQMSGNMLNLSDAPNTV) the chain is Mitochondrial intermembrane. Residues 186 to 206 (ATMATAVLIGYGVSRAGAAFF) form a helical membrane-spanning segment. Over 207–259 (NEVRNAVFGKVAQNSIRRIAKNVFLHLHNLDLGFHLSRQTGALSKAIDRGTRG) the chain is Mitochondrial matrix. Residues K216 and K251 each carry the N6-acetyllysine modification. Residues 260–280 (ISFVLSALVFNLLPIVFEMTL) form a helical membrane-spanning segment. At 281-290 (VSSVLYYKCG) the chain is on the mitochondrial intermembrane side. A helical membrane pass occupies residues 291–311 (AQFALVTLGTLGAYTAFTVAV). Residues 312–382 (TRWRTRFRIE…TLAMLNFGQS (71 aa)) lie on the Mitochondrial matrix side of the membrane. Glutathione is bound at residue 315 to 319 (RTRFR). Position 336 is a phosphoserine (S336). Y340 is modified (phosphotyrosine). T342 bears the Phosphothreonine mark. An N6-acetyllysine modification is found at K350. 378 to 381 (NFGQ) serves as a coordination point for glutathione. Residues 383 to 403 (AIFSVGLTAIMVLASQGIVAG) traverse the membrane as a helical segment. Topologically, residues 404 to 409 (ALTVGD) are mitochondrial intermembrane. Residues 410–430 (LVMVNGLLFQLSLPLNFLGTV) traverse the membrane as a helical segment. G428 is a glutathione binding site. Over 431–752 (YRETRQALID…SVKGCGNCSC (322 aa)) the chain is Mitochondrial matrix. In terms of domain architecture, ABC transporter spans 472–706 (VAFDNVHFEY…SSSIYSEMWH (235 aa)). ATP is bound by residues Y481 and 505 to 516 (GGSGSGKSTIVR).

The protein belongs to the ABC transporter superfamily. ABCB family. Heavy Metal importer (TC 3.A.1.210) subfamily. As to quaternary structure, homodimer or heterodimer. Interacts with C10orf88/PAAT. Forms a complex with ABCB10 and FECH, where a dimeric FECH bridges ABCB7 and ABCB10 homodimers; this complex may be required for cellular iron homeostasis, mitochondrial function and heme biosynthesis. Interacts with FECH. Interacts with ATP5F1A. Interacts with COX4I1; this interaction allows the regulation of cellular iron homeostasis and cellular reactive oxygen species (ROS) levels in cardiomyocytes.

The protein resides in the mitochondrion inner membrane. The catalysed reaction is (glutathione)4[2Fe(III)-2S] cluster(in) + ATP + H2O = (glutathione)4[2Fe(III)-2S] cluster(out) + ADP + phosphate + H(+). In terms of biological role, exports glutathione-coordinated iron-sulfur clusters such as [2Fe-2S]-(GS)4 cluster from the mitochondria to the cytosol in an ATP-dependent manner allowing the assembly of the cytosolic iron-sulfur (Fe/S) cluster-containing proteins and participates in iron homeostasis. Moreover, through a functional complex formed of ABCB7, FECH and ABCB10, also plays a role in the cellular iron homeostasis, mitochondrial function and heme biosynthesis. In cardiomyocytes, regulates cellular iron homeostasis and cellular reactive oxygen species (ROS) levels through its interaction with COX4I1. May also play a role in hematopoiesis. The protein is Iron-sulfur clusters transporter ABCB7, mitochondrial of Rattus norvegicus (Rat).